The primary structure comprises 571 residues: Cyclic di-GMP phosphodiesterase TpdA (571 aa).

The next 3 helical transmembrane spans lie at 155-175, 321-341, and 395-415; these read IAWV…YAIN, VYYI…FLVI, and TLIS…AIYA. One can recognise an EAL domain in the interval 344–571; sequence HRSLQAFITY…HQGYFYPLHF (228 aa).

The protein resides in the cell inner membrane. The enzyme catalyses 3',3'-c-di-GMP + H2O = 5'-phosphoguanylyl(3'-&gt;5')guanosine + H(+). In terms of biological role, cyclic di-GMP phosphodiesterase that plays an important role in modulating the global c-di-GMP pool. Its ability to alter the c-di-GMP pool has an effect on swimming motility, swarming motility and biofilm formation, multicellular behaviors that are important for the survival and dissemination of this environmental pathogen. Exhibits a dual function, namely, c-di-GMP degradation and modulation of its own expression. The protein is Cyclic di-GMP phosphodiesterase TpdA of Vibrio parahaemolyticus serotype O3:K6 (strain RIMD 2210633).